Here is an 88-residue protein sequence, read N- to C-terminus: Large ribosomal subunit protein bL27 (88 aa).

A disordered region spans residues 1-21; sequence MAHKKGASSSRNGRDSNAKRL.

This sequence belongs to the bacterial ribosomal protein bL27 family.

The polypeptide is Large ribosomal subunit protein bL27 (Thermobifida fusca (strain YX)).